The sequence spans 121 residues: Alpha-endosulfine (121 aa).

Residues 1–53 form a disordered region; that stretch reads MSQKQEEENPAEETGEEKQDTQEKEGILPEKAEEAKLKAKYPSLGQKPGGSDF. Ser2 is modified (N-acetylserine). Ser2 carries the phosphoserine modification. Residues 16-37 are compositionally biased toward basic and acidic residues; sequence EEKQDTQEKEGILPEKAEEAKL. At Thr21 the chain carries Phosphothreonine. The residue at position 43 (Ser43) is a Phosphoserine. Ser67 is subject to Phosphoserine; by GWL. Residues 79 to 121 form a disordered region; it reads NKQLPSAGPDKNLVTGDHIPTPQDLPQRKSSLVTSKLAGGQVE. Ser109 bears the Phosphoserine; by PKA mark.

The protein belongs to the endosulfine family. Interacts (when phosphorylated at Ser-67) with PPP2R2D. Interacts with ABCC8. Interacts with SNCA; interaction is disrupted when phosphorylated at Ser-109. Post-translationally, phosphorylation at Ser-67 by GWL during mitosis is essential for interaction with PPP2R2D (PR55-delta) and subsequent inactivation of PP2A. Phosphorylated by PKA.

The protein resides in the cytoplasm. Protein phosphatase inhibitor that specifically inhibits protein phosphatase 2A (PP2A) during mitosis. When phosphorylated at Ser-67 during mitosis, specifically interacts with PPP2R2D (PR55-delta) and inhibits its activity, leading to inactivation of PP2A, an essential condition to keep cyclin-B1-CDK1 activity high during M phase. Also acts as a stimulator of insulin secretion by interacting with sulfonylurea receptor (ABCC8), thereby preventing sulfonylurea from binding to its receptor and reducing K(ATP) channel currents. This chain is Alpha-endosulfine (ENSA), found in Bos taurus (Bovine).